The primary structure comprises 617 residues: Protein fem-1 homolog C (617 aa).

Residue methionine 1 is modified to N-acetylmethionine. ANK repeat units follow at residues 2 to 31 (DLKT…KEEV), 40 to 70 (NGAT…SIEV), 82 to 111 (EGAP…SVNN), 115 to 144 (TNST…DLEV), 148 to 177 (HGHT…DVNR), 181 to 210 (KGNT…KMEK), and 213 to 242 (YGMT…TSKT). TPR repeat units follow at residues 245–279 (INAL…RYSD) and 338–371 (SYYI…QQSN). ANK repeat units lie at residues 481 to 523 (NNFS…DVNV) and 527 to 556 (DDNS…HFDA).

It belongs to the fem-1 family. In terms of assembly, component of a Cul2-RING (CRL2) E3 ubiquitin-protein ligase complex, also named ECS (Elongin BC-CUL2/5-SOCS-box protein) complex, composed of CUL2, Elongin BC (ELOB and ELOC), RBX1 and substrate-specific adapter FEM1C. Widely expressed. Highly expressed in kidney, cardiac tissue, skeletal muscle and testis. Expressed at lower levels in other tissues, including cartilage.

The protein operates within protein modification; protein ubiquitination. Functionally, substrate-recognition component of a Cul2-RING (CRL2) E3 ubiquitin-protein ligase complex of the DesCEND (destruction via C-end degrons) pathway, which recognizes a C-degron located at the extreme C terminus of target proteins, leading to their ubiquitination and degradation. The C-degron recognized by the DesCEND pathway is usually a motif of less than ten residues and can be present in full-length proteins, truncated proteins or proteolytically cleaved forms. The CRL2(FEM1C) complex specifically recognizes proteins with an arginine at the C-terminus: recognizes and binds proteins ending with -Lys/Arg-Xaa-Arg and -Lys/Arg-Xaa-Xaa-Arg C-degrons, such as SIL1 or OR51B2, leading to their ubiquitination and degradation. The CRL2(FEM1C) complex mediates ubiquitination and degradation of truncated MSRB1/SEPX1 selenoproteins produced by failed UGA/Sec decoding. Promotes ubiquitination and degradation of SLBP. The protein is Protein fem-1 homolog C of Homo sapiens (Human).